The following is a 198-amino-acid chain: Probable nicotinate-nucleotide adenylyltransferase (198 aa).

The protein belongs to the NadD family.

It catalyses the reaction nicotinate beta-D-ribonucleotide + ATP + H(+) = deamido-NAD(+) + diphosphate. It functions in the pathway cofactor biosynthesis; NAD(+) biosynthesis; deamido-NAD(+) from nicotinate D-ribonucleotide: step 1/1. Functionally, catalyzes the reversible adenylation of nicotinate mononucleotide (NaMN) to nicotinic acid adenine dinucleotide (NaAD). The sequence is that of Probable nicotinate-nucleotide adenylyltransferase from Chlorobium limicola (strain DSM 245 / NBRC 103803 / 6330).